A 65-amino-acid polypeptide reads, in one-letter code: Small ribosomal subunit protein bS21B (65 aa).

This sequence belongs to the bacterial ribosomal protein bS21 family.

In Geobacter sulfurreducens (strain ATCC 51573 / DSM 12127 / PCA), this protein is Small ribosomal subunit protein bS21B.